A 300-amino-acid polypeptide reads, in one-letter code: CDAN1-interacting nuclease 1 (300 aa).

The protein localises to the nucleus. It is found in the cytoplasm. In terms of biological role, may play a role in erythroid cell differentiation. The protein is CDAN1-interacting nuclease 1 (cdin1) of Danio rerio (Zebrafish).